A 49-amino-acid chain; its full sequence is Small ribosomal subunit protein uS14B (49 aa).

It belongs to the universal ribosomal protein uS14 family. Zinc-binding uS14 subfamily. As to quaternary structure, part of the 30S ribosomal subunit.

Its function is as follows. Binds 16S rRNA, required for the assembly of 30S particles. The sequence is that of Small ribosomal subunit protein uS14B from Natronomonas pharaonis (strain ATCC 35678 / DSM 2160 / CIP 103997 / JCM 8858 / NBRC 14720 / NCIMB 2260 / Gabara) (Halobacterium pharaonis).